We begin with the raw amino-acid sequence, 576 residues long: uncharacterized protein (576 aa).

The Cytoplasmic segment spans residues 1-8 (MSLSLGAA). A helical membrane pass occupies residues 9–29 (IYIALKPIFKIYTIMLVGYLV). Residues 30-45 (AKFDIVSMENAKGISN) lie on the Extracellular side of the membrane. Residues 46 to 66 (MVVNAILPCLTFNKIVSNISW) traverse the membrane as a helical segment. Over 67 to 71 (RDIKE) the chain is Cytoplasmic. A helical transmembrane segment spans residues 72 to 92 (IGVIILSAFILFVLGATGALF). Over 93–103 (TTFATTVPKKF) the chain is Extracellular. Residues 104-124 (FWGLIFAGFFPNISDLPIAYI) traverse the membrane as a helical segment. Topologically, residues 125–141 (QSMGNGSIFTAEEADKG) are cytoplasmic. Residues 142–162 (VAYSCIFLFIQSFLMMNFGMW) traverse the membrane as a helical segment. Over 163–400 (RVVGLDFRDT…FIINCLRPAS (238 aa)) the chain is Extracellular. A helical transmembrane segment spans residues 401–421 (LGAILGIICALIPWVKACFVT). Topologically, residues 422–437 (TYVHVHKAPDGEPVLN) are cytoplasmic. The chain crosses the membrane as a helical span at residues 438 to 458 (FLMDFTEYIGNACVPLGLLLL). Residues 459–476 (GGTLARLEIKSLPPGFIK) lie on the Extracellular side of the membrane. A helical transmembrane segment spans residues 477 to 497 (SALLMTCFRLIVIPIIGVLWV). The Cytoplasmic portion of the chain corresponds to 498–512 (NKLYSIDWLDTGIGK). The chain crosses the membrane as a helical span at residues 513-533 (FDMILTWSMPSATAQVYFTAF). Residues 534-545 (YTPACGDHIQMN) lie on the Extracellular side of the membrane. Residues 546-566 (CLSVLFVMQYAILFITVAFVV) form a helical membrane-spanning segment. Residues 567–576 (TYTLKVDLKV) are Cytoplasmic-facing.

Belongs to the auxin efflux carrier (TC 2.A.69) family.

The protein localises to the membrane. This is an uncharacterized protein from Saccharomyces cerevisiae (strain ATCC 204508 / S288c) (Baker's yeast).